Consider the following 145-residue polypeptide: Holo-[acyl-carrier-protein] synthase (145 aa).

Residues D9 and E63 each coordinate Mg(2+).

Belongs to the P-Pant transferase superfamily. AcpS family. Mg(2+) serves as cofactor.

It localises to the cytoplasm. It catalyses the reaction apo-[ACP] + CoA = holo-[ACP] + adenosine 3',5'-bisphosphate + H(+). Its function is as follows. Transfers the 4'-phosphopantetheine moiety from coenzyme A to a Ser of acyl-carrier-protein. The chain is Holo-[acyl-carrier-protein] synthase from Burkholderia vietnamiensis (strain G4 / LMG 22486) (Burkholderia cepacia (strain R1808)).